The chain runs to 116 residues: NADH-ubiquinone oxidoreductase chain 3 (116 aa).

3 consecutive transmembrane segments (helical) span residues 10-30, 64-84, and 88-108; these read FLTLFVSILIFLITTLITFAA, FFLVAILFLLFDLEIALLFPL, and VFFHPIHTPLILTVGLIFEWV.

The protein belongs to the complex I subunit 3 family.

It is found in the mitochondrion membrane. The enzyme catalyses a ubiquinone + NADH + 5 H(+)(in) = a ubiquinol + NAD(+) + 4 H(+)(out). In terms of biological role, core subunit of the mitochondrial membrane respiratory chain NADH dehydrogenase (Complex I) that is believed to belong to the minimal assembly required for catalysis. Complex I functions in the transfer of electrons from NADH to the respiratory chain. The immediate electron acceptor for the enzyme is believed to be ubiquinone. This chain is NADH-ubiquinone oxidoreductase chain 3 (ND3), found in Patiria pectinifera (Starfish).